A 523-amino-acid polypeptide reads, in one-letter code: 2-isopropylmalate synthase (523 aa).

A Pyruvate carboxyltransferase domain is found at 5 to 267; sequence VIIFDTTLRD…ETGINAKEIH (263 aa). Positions 14, 202, 204, and 238 each coordinate Mn(2+). The regulatory domain stretch occupies residues 392–523; sequence KLAQLVVHSD…QKDRSELGGV (132 aa).

This sequence belongs to the alpha-IPM synthase/homocitrate synthase family. LeuA type 1 subfamily. As to quaternary structure, homodimer. Mn(2+) serves as cofactor.

The protein resides in the cytoplasm. The catalysed reaction is 3-methyl-2-oxobutanoate + acetyl-CoA + H2O = (2S)-2-isopropylmalate + CoA + H(+). It participates in amino-acid biosynthesis; L-leucine biosynthesis; L-leucine from 3-methyl-2-oxobutanoate: step 1/4. Functionally, catalyzes the condensation of the acetyl group of acetyl-CoA with 3-methyl-2-oxobutanoate (2-ketoisovalerate) to form 3-carboxy-3-hydroxy-4-methylpentanoate (2-isopropylmalate). This is 2-isopropylmalate synthase from Shewanella sediminis (strain HAW-EB3).